Here is a 340-residue protein sequence, read N- to C-terminus: ATP-dependent 6-phosphofructokinase (340 aa).

ATP is bound at residue Gly-11. 21-25 (RAVVR) lines the ADP pocket. ATP contacts are provided by residues 72–73 (RY) and 102–105 (GDGS). Asp-103 contributes to the Mg(2+) binding site. Residue 125-127 (TID) participates in substrate binding. Asp-127 acts as the Proton acceptor in catalysis. Arg-154 serves as a coordination point for ADP. Residues Arg-162 and 169 to 171 (MGR) each bind substrate. ADP contacts are provided by residues 185 to 187 (GAD) and 213 to 215 (KHH). Substrate is bound by residues Glu-222, Arg-244, and 250 to 253 (HLLR).

Belongs to the phosphofructokinase type A (PFKA) family. ATP-dependent PFK group I subfamily. Prokaryotic clade 'B1' sub-subfamily. As to quaternary structure, homotetramer. Mg(2+) serves as cofactor.

It is found in the cytoplasm. The catalysed reaction is beta-D-fructose 6-phosphate + ATP = beta-D-fructose 1,6-bisphosphate + ADP + H(+). The protein operates within carbohydrate degradation; glycolysis; D-glyceraldehyde 3-phosphate and glycerone phosphate from D-glucose: step 3/4. Its activity is regulated as follows. Allosterically activated by ADP and other diphosphonucleosides, and allosterically inhibited by phosphoenolpyruvate. Its function is as follows. Catalyzes the phosphorylation of D-fructose 6-phosphate to fructose 1,6-bisphosphate by ATP, the first committing step of glycolysis. The polypeptide is ATP-dependent 6-phosphofructokinase (Streptococcus agalactiae serotype Ia (strain ATCC 27591 / A909 / CDC SS700)).